The chain runs to 448 residues: Glutamyl-tRNA reductase (448 aa).

Substrate-binding positions include 49 to 52 (TCNR), Ser109, 114 to 116 (ETQ), and Gln120. The active-site Nucleophile is Cys50. An NADP(+)-binding site is contributed by 189–194 (GAGEMS).

This sequence belongs to the glutamyl-tRNA reductase family. Homodimer.

The catalysed reaction is (S)-4-amino-5-oxopentanoate + tRNA(Glu) + NADP(+) = L-glutamyl-tRNA(Glu) + NADPH + H(+). Its pathway is porphyrin-containing compound metabolism; protoporphyrin-IX biosynthesis; 5-aminolevulinate from L-glutamyl-tRNA(Glu): step 1/2. In terms of biological role, catalyzes the NADPH-dependent reduction of glutamyl-tRNA(Glu) to glutamate 1-semialdehyde (GSA). In Staphylococcus aureus (strain MRSA252), this protein is Glutamyl-tRNA reductase.